The sequence spans 628 residues: Very-long-chain aldehyde decarbonylase GL1-2 (628 aa).

The next 5 helical transmembrane spans lie at 37–57, 131–151, 191–211, 299–319, and 331–351; these read GAAP…ARGL, GWAI…YWAH, VVIG…VGLV, DFVF…PFVL, and FVLL…WCCS. The 141-residue stretch at 137-277 folds into the Fatty acid hydroxylase domain; the sequence is LLHVLVAEPL…MPIFDLLGGT (141 aa).

It belongs to the sterol desaturase family. As to quaternary structure, homodimer.

Its subcellular location is the endoplasmic reticulum membrane. It carries out the reaction a long-chain fatty aldehyde + 2 NADPH + O2 + H(+) = a long-chain alkane + formate + 2 NADP(+) + H2O. Its function is as follows. Aldehyde decarbonylase involved in the conversion of aldehydes to alkanes. Core component of a very-long-chain alkane synthesis complex. The chain is Very-long-chain aldehyde decarbonylase GL1-2 from Oryza sativa subsp. indica (Rice).